The sequence spans 562 residues: Arginine--tRNA ligase (562 aa).

The 'HIGH' region motif lies at 129-139; that stretch reads ANPTGPLHVGH.

The protein belongs to the class-I aminoacyl-tRNA synthetase family. Monomer.

Its subcellular location is the cytoplasm. The enzyme catalyses tRNA(Arg) + L-arginine + ATP = L-arginyl-tRNA(Arg) + AMP + diphosphate. This is Arginine--tRNA ligase from Xanthomonas oryzae pv. oryzae (strain KACC10331 / KXO85).